The chain runs to 721 residues: Cell wall protein RBT1 (721 aa).

The N-terminal stretch at 1–20 (MRFATAQLAALAYYILSTEA) is a signal peptide. The region spanning 55-278 (GSKNKREAEI…DCQCDTPSPS (224 aa)) is the Flo11 domain. Disordered regions lie at residues 278–410 (STTT…LTTT), 453–510 (LTET…TVTE), and 555–666 (TPAT…ALVS). Low complexity predominate over residues 454-499 (TETTPVPSSVDSTSVTSAPETTPESTAPESSAPESSAPESSAPVTE). Positions 500–510 (TPTGPVSTVTE) are enriched in polar residues. Low complexity-rich tracts occupy residues 555–575 (TPAT…VPAT) and 584–663 (SSAP…KTSA). S696 is lipidated: GPI-anchor amidated serine. A propeptide spans 697–721 (SFEGAGNNMRLTYGAAIIGLAAFLI) (removed in mature form).

Belongs to the HWP1 family. The GPI-anchor is attached to the protein in the endoplasmic reticulum and serves to target the protein to the cell surface. There, the glucosamine-inositol phospholipid moiety is cleaved off and the GPI-modified mannoprotein is covalently attached via its lipidless GPI glycan remnant to the 1,6-beta-glucan of the outer cell wall layer.

It localises to the secreted. It is found in the cell wall. The protein resides in the membrane. GPI-anchored cell wall protein required for mating efficiency, biofilm formation, and virulence. Involved in normal disseminated infection, but not in intestinal colonization. In Candida albicans (strain SC5314 / ATCC MYA-2876) (Yeast), this protein is Cell wall protein RBT1 (RBT1).